Consider the following 208-residue polypeptide: ATP phosphoribosyltransferase (208 aa).

The protein belongs to the ATP phosphoribosyltransferase family. Short subfamily. In terms of assembly, heteromultimer composed of HisG and HisZ subunits.

It localises to the cytoplasm. It carries out the reaction 1-(5-phospho-beta-D-ribosyl)-ATP + diphosphate = 5-phospho-alpha-D-ribose 1-diphosphate + ATP. Its pathway is amino-acid biosynthesis; L-histidine biosynthesis; L-histidine from 5-phospho-alpha-D-ribose 1-diphosphate: step 1/9. In terms of biological role, catalyzes the condensation of ATP and 5-phosphoribose 1-diphosphate to form N'-(5'-phosphoribosyl)-ATP (PR-ATP). Has a crucial role in the pathway because the rate of histidine biosynthesis seems to be controlled primarily by regulation of HisG enzymatic activity. This Thermotoga petrophila (strain ATCC BAA-488 / DSM 13995 / JCM 10881 / RKU-1) protein is ATP phosphoribosyltransferase.